The sequence spans 314 residues: Olfactory receptor 51I1 (314 aa).

Topologically, residues 1–27 (MLGLNGTPFQPATLQLTGIPGIQTGLT) are extracellular. The helical transmembrane segment at 28–48 (WVALIFCILYMISIVGNLSIL) threads the bilayer. Residues 49–56 (TLVFWEPA) lie on the Cytoplasmic side of the membrane. Residues 57-77 (LHQPMYYFLSMLALNDLGVSF) traverse the membrane as a helical segment. At 78–101 (STLPTVISTFCFNYNHVAFNACLV) the chain is on the extracellular side. A disulfide bridge connects residues cysteine 99 and cysteine 191. The chain crosses the membrane as a helical span at residues 102 to 122 (QMFFIHTFSFMESGILLAMSL). Residues 123-141 (DRFVAICYPLRYVTVLTHN) are Cytoplasmic-facing. The chain crosses the membrane as a helical span at residues 142-162 (RILAMGLGILTKSFTTLFPFP). The Extracellular segment spans residues 163–198 (FVVKRLPFCKGNVLHHSYCLHPDLMKVACGDIHVNN). A helical transmembrane segment spans residues 199–219 (IYGLLVIIFTYGMDSTFILLS). At 220 to 239 (YALILRAMLVIISQEQRLKA) the chain is on the cytoplasmic side. The helical transmembrane segment at 240–260 (LNTCMSHICAVLAFYVPIIAV) threads the bilayer. The Extracellular segment spans residues 261 to 275 (SMIHRFWKSAPPVVH). The helical transmembrane segment at 276–296 (VMMSNVYLFVPPMLNPIIYSV) threads the bilayer. The Cytoplasmic segment spans residues 297 to 314 (KTKEIRKGILKFFHKSQA).

The protein belongs to the G-protein coupled receptor 1 family.

It localises to the cell membrane. Its function is as follows. Odorant receptor. This Homo sapiens (Human) protein is Olfactory receptor 51I1 (OR51I1).